We begin with the raw amino-acid sequence, 532 residues long: 2,3-bisphosphoglycerate-independent phosphoglycerate mutase (532 aa).

2 residues coordinate Mn(2+): D15 and S65. The active-site Phosphoserine intermediate is the S65. Residues H126, 156–157, R188, R194, 258–261, and K331 each bind substrate; these read RD and RPDR. 5 residues coordinate Mn(2+): D398, H402, D439, H440, and H457.

Belongs to the BPG-independent phosphoglycerate mutase family. Monomer. The cofactor is Mn(2+).

The enzyme catalyses (2R)-2-phosphoglycerate = (2R)-3-phosphoglycerate. Its pathway is carbohydrate degradation; glycolysis; pyruvate from D-glyceraldehyde 3-phosphate: step 3/5. Functionally, catalyzes the interconversion of 2-phosphoglycerate and 3-phosphoglycerate. This Nostoc punctiforme (strain ATCC 29133 / PCC 73102) protein is 2,3-bisphosphoglycerate-independent phosphoglycerate mutase.